The sequence spans 351 residues: 3-ketosteroid-9-alpha-monooxygenase, ferredoxin reductase component (351 aa).

Positions 10-116 constitute an FAD-binding FR-type domain; it reads SRSVILTVSA…LPPAGVFTPK (107 aa). Residues 264–351 form the 2Fe-2S ferredoxin-type domain; it reads ATVEVELDGE…PVTDHLKIEF (88 aa). 4 residues coordinate [2Fe-2S] cluster: cysteine 300, cysteine 305, cysteine 308, and cysteine 338.

The two-component system 3-ketosteroid-9-alpha-monooxygenase is composed of an oxygenase component KshA and a reductase component KshB. FAD is required as a cofactor. Requires [2Fe-2S] cluster as cofactor.

It carries out the reaction androsta-1,4-diene-3,17-dione + 2 reduced [2Fe-2S]-[ferredoxin] + O2 + 2 H(+) = 9alpha-hydroxyandrosta-1,4-diene-3,17-dione + 2 oxidized [2Fe-2S]-[ferredoxin] + H2O. It participates in steroid metabolism; cholesterol degradation. KSH activity is completely inhibited by zinc ions. KshB is specifically inhibited by Cu(2+) ions. Its function is as follows. Probably involved in the degradation of cholesterol. In vitro, catalyzes the introduction of a 9alpha-hydroxyl moiety into the ring B of 3-ketosteroid substrates such as 1,4-androstadiene-3,17-dione (ADD), 4-androstene-3,17-dione (AD), 4-androstene-17beta-ol-3-one (testosterone), 4-pregnene-3,20-dione (progesterone), 19-nor-4-androstene-3,17-dione (nordion), 1-(5alpha)-androstene-3,17-dione, 5alpha-androstane-3,17-dione and 5beta-androstane-3,17-dione. KSH has the highest activity with 3-keto-Delta4 steroid substrates. This is 3-ketosteroid-9-alpha-monooxygenase, ferredoxin reductase component from Rhodococcus rhodochrous.